Consider the following 394-residue polypeptide: 1-deoxy-D-xylulose 5-phosphate reductoisomerase (394 aa).

NADPH-binding residues include Thr10, Gly11, Ser12, Ile13, Gly38, Arg39, Asn40, and Asn123. Lys124 is a binding site for 1-deoxy-D-xylulose 5-phosphate. Glu125 lines the NADPH pocket. Asp149 contributes to the Mn(2+) binding site. 4 residues coordinate 1-deoxy-D-xylulose 5-phosphate: Ser150, Glu151, Ser175, and His198. Position 151 (Glu151) interacts with Mn(2+). Residue Gly204 participates in NADPH binding. 1-deoxy-D-xylulose 5-phosphate is bound by residues Ser211, Asn216, Lys217, and Glu220. Position 220 (Glu220) interacts with Mn(2+).

The protein belongs to the DXR family. The cofactor is Mg(2+). Mn(2+) is required as a cofactor.

The enzyme catalyses 2-C-methyl-D-erythritol 4-phosphate + NADP(+) = 1-deoxy-D-xylulose 5-phosphate + NADPH + H(+). The protein operates within isoprenoid biosynthesis; isopentenyl diphosphate biosynthesis via DXP pathway; isopentenyl diphosphate from 1-deoxy-D-xylulose 5-phosphate: step 1/6. Functionally, catalyzes the NADPH-dependent rearrangement and reduction of 1-deoxy-D-xylulose-5-phosphate (DXP) to 2-C-methyl-D-erythritol 4-phosphate (MEP). The sequence is that of 1-deoxy-D-xylulose 5-phosphate reductoisomerase from Cereibacter sphaeroides (strain ATCC 17023 / DSM 158 / JCM 6121 / CCUG 31486 / LMG 2827 / NBRC 12203 / NCIMB 8253 / ATH 2.4.1.) (Rhodobacter sphaeroides).